A 502-amino-acid chain; its full sequence is Probable malate:quinone oxidoreductase (502 aa).

Belongs to the MQO family. FAD serves as cofactor.

The catalysed reaction is (S)-malate + a quinone = a quinol + oxaloacetate. The protein operates within carbohydrate metabolism; tricarboxylic acid cycle; oxaloacetate from (S)-malate (quinone route): step 1/1. In Oceanobacillus iheyensis (strain DSM 14371 / CIP 107618 / JCM 11309 / KCTC 3954 / HTE831), this protein is Probable malate:quinone oxidoreductase.